A 397-amino-acid polypeptide reads, in one-letter code: Torsin-3A (397 aa).

The N-terminal stretch at 1–25 (MLRGPWRQLWLFFLLLLPGAPEPRG) is a signal peptide. Residue Asn122 is glycosylated (N-linked (GlcNAc...) asparagine). 167-174 (GWSGTGKN) contacts ATP.

This sequence belongs to the ClpA/ClpB family. Torsin subfamily. May not form homohexamers. N-glycosylated. In terms of tissue distribution, ubiquitously expressed. Highest expression in stomach, salivary glands and lymph nodes. Isoform 2 is expressed in placenta.

It is found in the cytoplasm. The protein localises to the endoplasmic reticulum lumen. This chain is Torsin-3A (TOR3A), found in Homo sapiens (Human).